A 94-amino-acid polypeptide reads, in one-letter code: Integration host factor subunit beta (94 aa).

This sequence belongs to the bacterial histone-like protein family. As to quaternary structure, heterodimer of an alpha and a beta chain.

This protein is one of the two subunits of integration host factor, a specific DNA-binding protein that functions in genetic recombination as well as in transcriptional and translational control. This is Integration host factor subunit beta from Haemophilus influenzae (strain PittGG).